The following is a 907-amino-acid chain: Probable ubiquitin-conjugating enzyme E2 24 (907 aa).

2 disordered regions span residues methionine 1–glutamate 23 and serine 485–serine 509. Over residues glutamine 495–serine 509 the composition is skewed to polar residues. One can recognise a UBC core domain in the interval serine 662–isoleucine 822. Residue cysteine 748 is the Glycyl thioester intermediate of the active site.

This sequence belongs to the ubiquitin-conjugating enzyme family. In terms of assembly, interacts with PHO1. Interacts with NLA. As to expression, expressed in the vascular tissues of cotyledons, leaves, roots, sepals, filaments, anthers and junctions between the inflorescence stems and siliques.

It is found in the golgi apparatus membrane. Its subcellular location is the endoplasmic reticulum membrane. The enzyme catalyses S-ubiquitinyl-[E1 ubiquitin-activating enzyme]-L-cysteine + [E2 ubiquitin-conjugating enzyme]-L-cysteine = [E1 ubiquitin-activating enzyme]-L-cysteine + S-ubiquitinyl-[E2 ubiquitin-conjugating enzyme]-L-cysteine.. Its pathway is protein modification; protein ubiquitination. Functionally, E2 ubiquitin-protein ligase that mediates E1-dependent protein ubiquitination. Mediates PHO1 degradation through multivesicular body-mediated vacuolar proteolysis in response to inorganic phosphate (Pi) availability. Negatively regulates the protein abundance of PHF1 and PHT1s under Pi-sufficient conditions by facilitating the degradation of PHT1 proteins at the endomembrane. Functions cooperatively with NLA to regulate the abundance of the inorganic phosphate (Pi) transporters PHT1-1, PHT1-2 and PHT1-3 in different subcellular compartments. Regulates Pi homeostasis by mediating, cooperatively with NLA, polyubiquitination of PHT1-4 and its targeting for degradation. In Arabidopsis thaliana (Mouse-ear cress), this protein is Probable ubiquitin-conjugating enzyme E2 24.